The chain runs to 178 residues: MDSQSPSAGARPITHTTTPPARKLPDIHLDIVLVVFCGGAIGTAIRYAFAQIPAAGSFHTGTFVANMLACFCYAGLTAYLAGASRFGARSKELASRGLGMGVCGGLSTMSTLALEGFTAIRDGQVAAGIAYLLVTFALGLVCASAGVWAGTHLAGSSNVSAEASADTNAATTSKGGKA.

4 consecutive transmembrane segments (helical) span residues 25-45, 63-83, 97-117, and 129-149; these read PDIH…GTAI, FVAN…LAGA, GLGM…LEGF, and IAYL…GVWA. Na(+) is bound by residues Gly104 and Ser107.

Belongs to the fluoride channel Fluc/FEX (TC 1.A.43) family.

It localises to the cell membrane. The catalysed reaction is fluoride(in) = fluoride(out). Na(+) is not transported, but it plays an essential structural role and its presence is essential for fluoride channel function. In terms of biological role, fluoride-specific ion channel. Important for reducing fluoride concentration in the cell, thus reducing its toxicity. The chain is Fluoride-specific ion channel FluC 2 from Bifidobacterium longum (strain NCC 2705).